The primary structure comprises 443 residues: MFLAQEIIRKKRNAEALSKEEIQFFVKGITDNTVSEGQIAALGMAVYFNDMNMDERIALTTSMRDSGTVLNWKSLDLDGPIIDKHSTGGVGDVISLMLGPMAAACGGYVPMISGRGLGHTGGTLDKFDAIPGYQTEPDSALFRKVVKEAGVAIIGQTGDLVPADKRFYSIRDNTATVESISLITASILSKKLAAGLDALAMDVKVGSGAFMPTYEASEELARSITAVANGAGTKTTALLTDMNQVLASCAGNAVEVKEAVDFLTGAYRNPRLYEVTMGLCAEMLQLGGIASSEAEAREKLNRVLDNGKAAEIFGRMISGLGGPADFIENTGLYLPESKIIRPVYADQTGFASAMDTRELGLAVVTLGGGRRKPGDALDYSVGLTKVCALGDEISADKPIAFIHAQTENAFAEAEAAVKKAIHVGETKPEKTPEIYRYIRESDL.

The protein belongs to the thymidine/pyrimidine-nucleoside phosphorylase family. Homodimer.

The enzyme catalyses thymidine + phosphate = 2-deoxy-alpha-D-ribose 1-phosphate + thymine. It functions in the pathway pyrimidine metabolism; dTMP biosynthesis via salvage pathway; dTMP from thymine: step 1/2. In terms of biological role, the enzymes which catalyze the reversible phosphorolysis of pyrimidine nucleosides are involved in the degradation of these compounds and in their utilization as carbon and energy sources, or in the rescue of pyrimidine bases for nucleotide synthesis. The polypeptide is Thymidine phosphorylase (Shewanella sediminis (strain HAW-EB3)).